The chain runs to 283 residues: 4-diphosphocytidyl-2-C-methyl-D-erythritol kinase (283 aa).

Residue Lys-12 is part of the active site. ATP is bound at residue Pro-99 to Ala-109. The active site involves Asp-141.

Belongs to the GHMP kinase family. IspE subfamily.

The catalysed reaction is 4-CDP-2-C-methyl-D-erythritol + ATP = 4-CDP-2-C-methyl-D-erythritol 2-phosphate + ADP + H(+). Its pathway is isoprenoid biosynthesis; isopentenyl diphosphate biosynthesis via DXP pathway; isopentenyl diphosphate from 1-deoxy-D-xylulose 5-phosphate: step 3/6. Functionally, catalyzes the phosphorylation of the position 2 hydroxy group of 4-diphosphocytidyl-2C-methyl-D-erythritol. The chain is 4-diphosphocytidyl-2-C-methyl-D-erythritol kinase from Sphingopyxis alaskensis (strain DSM 13593 / LMG 18877 / RB2256) (Sphingomonas alaskensis).